The chain runs to 411 residues: CinA-like protein (411 aa).

Belongs to the CinA family.

In Dictyoglomus thermophilum (strain ATCC 35947 / DSM 3960 / H-6-12), this protein is CinA-like protein.